The following is a 90-amino-acid chain: Probable Fe(2+)-trafficking protein (90 aa).

Belongs to the Fe(2+)-trafficking protein family.

Functionally, could be a mediator in iron transactions between iron acquisition and iron-requiring processes, such as synthesis and/or repair of Fe-S clusters in biosynthetic enzymes. The protein is Probable Fe(2+)-trafficking protein of Halorhodospira halophila (strain DSM 244 / SL1) (Ectothiorhodospira halophila (strain DSM 244 / SL1)).